The chain runs to 317 residues: L-lactate dehydrogenase (317 aa).

NAD(+) is bound by residues Val17, Asp38, Lys43, Tyr69, and 83 to 84; that span reads GA. Positions 86 and 92 each coordinate substrate. Residues Ser105, 122–124, and Ser147 contribute to the NAD(+) site; that span reads ATN. Substrate is bound at residue 124 to 127; that stretch reads NPVD. Residue 152–155 coordinates substrate; the sequence is DSAR. Residues Arg157 and His172 each coordinate beta-D-fructose 1,6-bisphosphate. The active-site Proton acceptor is the His179. Tyr224 carries the post-translational modification Phosphotyrosine. A substrate-binding site is contributed by Thr233.

This sequence belongs to the LDH/MDH superfamily. LDH family. Homotetramer.

It is found in the cytoplasm. The enzyme catalyses (S)-lactate + NAD(+) = pyruvate + NADH + H(+). It participates in fermentation; pyruvate fermentation to lactate; (S)-lactate from pyruvate: step 1/1. Its activity is regulated as follows. Allosterically activated by fructose 1,6-bisphosphate (FBP). Its function is as follows. Catalyzes the conversion of lactate to pyruvate. This is L-lactate dehydrogenase from Bacillus velezensis (strain DSM 23117 / BGSC 10A6 / LMG 26770 / FZB42) (Bacillus amyloliquefaciens subsp. plantarum).